The chain runs to 525 residues: GMP synthase [glutamine-hydrolyzing] (525 aa).

The Glutamine amidotransferase type-1 domain occupies 8–207 (KILILDFGSQ…ALDICGCAAN (200 aa)). Cys85 (nucleophile) is an active-site residue. Active-site residues include His181 and Glu183. One can recognise a GMPS ATP-PPase domain in the interval 208–400 (WKPSSIIEDA…LGLPYNMLYR (193 aa)). ATP is bound at residue 235-241 (SGGVDSS).

In terms of assembly, homodimer.

The catalysed reaction is XMP + L-glutamine + ATP + H2O = GMP + L-glutamate + AMP + diphosphate + 2 H(+). It participates in purine metabolism; GMP biosynthesis; GMP from XMP (L-Gln route): step 1/1. In terms of biological role, catalyzes the synthesis of GMP from XMP. This is GMP synthase [glutamine-hydrolyzing] from Shewanella sp. (strain MR-7).